The following is a 398-amino-acid chain: Succinate--CoA ligase [ADP-forming] subunit beta (398 aa).

In terms of domain architecture, ATP-grasp spans 9–254 (KRLLHTYGAP…LTEEDPKEIE (246 aa)). Residues K46, 53 to 55 (GRG), E109, A112, and E117 each bind ATP. The Mg(2+) site is built by N209 and D223. Substrate-binding positions include N274 and 331 to 333 (GIM).

Belongs to the succinate/malate CoA ligase beta subunit family. In terms of assembly, heterotetramer of two alpha and two beta subunits. Requires Mg(2+) as cofactor.

The catalysed reaction is succinate + ATP + CoA = succinyl-CoA + ADP + phosphate. It carries out the reaction GTP + succinate + CoA = succinyl-CoA + GDP + phosphate. It functions in the pathway carbohydrate metabolism; tricarboxylic acid cycle; succinate from succinyl-CoA (ligase route): step 1/1. Its function is as follows. Succinyl-CoA synthetase functions in the citric acid cycle (TCA), coupling the hydrolysis of succinyl-CoA to the synthesis of either ATP or GTP and thus represents the only step of substrate-level phosphorylation in the TCA. The beta subunit provides nucleotide specificity of the enzyme and binds the substrate succinate, while the binding sites for coenzyme A and phosphate are found in the alpha subunit. This Brucella abortus (strain S19) protein is Succinate--CoA ligase [ADP-forming] subunit beta.